The chain runs to 496 residues: 4-O-methyl-glucuronoyl methylesterase 1 (496 aa).

The N-terminal stretch at 1 to 19 is a signal peptide; it reads MKSTVASALLVLAGTAVQA. The CBM1 domain maps to 20–55; the sequence is QSGPWQQCGGIGWQGPFTCVSGHTCQVLNDWYHQCV. A disordered region spans residues 57–151; sequence GGGPSPPPTS…RLPDPFTFHN (95 aa). A compositionally biased stretch (pro residues) spans 59 to 125; it reads GPSPPPTSPP…SPPPTSPPPS (67 aa). Disulfide bonds link C129-C163, C307-C443, and C339-C415. The GXSYXG catalytic site motif motif lies at 306–311; sequence GCSRNG. S308 functions as the Nucleophile in the catalytic mechanism. Residues K312, Q354, E362, and W406 each contribute to the substrate site. Catalysis depends on H442, which acts as the Proton donor/acceptor.

Belongs to the carbohydrate esterase 15 (CE15) family.

The protein resides in the secreted. The enzyme catalyses a 4-O-methyl-alpha-D-glucuronosyl ester derivative + H2O = 4-O-methyl-alpha-D-glucuronate derivative + an alcohol + H(+). Its function is as follows. Glucuronoyl esterase which may play a significant role in biomass degradation, as it is considered to disconnect hemicellulose from lignin through the hydrolysis of the ester bond between 4-O-methyl-D-glucuronic acid residues of glucuronoxylans and aromatic alcohols of lignin. Cleaves native lignin-carbohydrate (LC) ester bonds from LC complex preparations of spruce (softwood) and birch (hardwood), containing mainly hemicelluloses with partially acetylated glucomannans in spruce and partially acetylated xylan in birch. Can hydrolyze benzyl glucuronic acid (BnGlcA), allyl glucuronic acid (allylGlcA) and to a lower degree methyl glucuronic acid (MeGlcA) in vitro. This is 4-O-methyl-glucuronoyl methylesterase 1 from Sodiomyces alcalophilus (Acremonium alcalophilum).